Reading from the N-terminus, the 356-residue chain is Phospho-2-dehydro-3-deoxyheptonate aldolase, Tyr-sensitive (356 aa).

It belongs to the class-I DAHP synthase family.

It catalyses the reaction D-erythrose 4-phosphate + phosphoenolpyruvate + H2O = 7-phospho-2-dehydro-3-deoxy-D-arabino-heptonate + phosphate. It participates in metabolic intermediate biosynthesis; chorismate biosynthesis; chorismate from D-erythrose 4-phosphate and phosphoenolpyruvate: step 1/7. Its function is as follows. Stereospecific condensation of phosphoenolpyruvate (PEP) and D-erythrose-4-phosphate (E4P) giving rise to 3-deoxy-D-arabino-heptulosonate-7-phosphate (DAHP). In Salmonella typhi, this protein is Phospho-2-dehydro-3-deoxyheptonate aldolase, Tyr-sensitive (aroF).